The sequence spans 98 residues: NADH-ubiquinone oxidoreductase chain 4L (98 aa).

Helical transmembrane passes span 1 to 21 (MSPM…GLAF), 26 to 46 (LLSA…ATAT), and 58 to 78 (ILPM…LAIL).

The protein belongs to the complex I subunit 4L family.

Its subcellular location is the mitochondrion membrane. It carries out the reaction a ubiquinone + NADH + 5 H(+)(in) = a ubiquinol + NAD(+) + 4 H(+)(out). Core subunit of the mitochondrial membrane respiratory chain NADH dehydrogenase (Complex I) which catalyzes electron transfer from NADH through the respiratory chain, using ubiquinone as an electron acceptor. Part of the enzyme membrane arm which is embedded in the lipid bilayer and involved in proton translocation. The polypeptide is NADH-ubiquinone oxidoreductase chain 4L (MT-ND4L) (Scyliorhinus canicula (Small-spotted catshark)).